The following is a 272-amino-acid chain: Expansin-B16 (272 aa).

The first 25 residues, 1–25 (MAAFSSSSSAPMLIRSVLFVSLLSA), serve as a signal peptide directing secretion. Positions 63-173 (GGACGYGTLV…RRTACKYGGK (111 aa)) constitute an Expansin-like EG45 domain. Disulfide bonds link cysteine 66-cysteine 95, cysteine 98-cysteine 168, and cysteine 103-cysteine 109. Residues 186 to 267 (FWLSLLVEFE…NWTPKATYTS (82 aa)) form the Expansin-like CBD domain.

Belongs to the expansin family. Expansin B subfamily.

It localises to the secreted. It is found in the cell wall. The protein localises to the membrane. May cause loosening and extension of plant cell walls by disrupting non-covalent bonding between cellulose microfibrils and matrix glucans. No enzymatic activity has been found. May be required for rapid internodal elongation in deepwater rice during submergence. The polypeptide is Expansin-B16 (EXPB16) (Oryza sativa subsp. japonica (Rice)).